The chain runs to 223 residues: Membrane-associated progesterone receptor component 2 (223 aa).

A disordered region spans residues 1–33; the sequence is MAAGDGDVKLGTLGSGSESSNDGGSESPGDAGA. The O-linked (Xyl...) (chondroitin sulfate) serine glycan is linked to serine 15. Residues 15 to 33 are compositionally biased toward low complexity; sequence SGSESSNDGGSESPGDAGA. Residues 42–66 form a helical membrane-spanning segment; that stretch reads AAALALLTGGGEMLLNVALVALVLL. Residues serine 90, serine 104, and serine 208 each carry the phosphoserine modification. The Cytochrome b5 heme-binding domain maps to 102-201; the sequence is DFSLEQLRQY…EKYDYVGRLL (100 aa). The segment at 202–223 is disordered; it reads KPGEEPSEYTDEEDTKDHNKQD. Over residues 206-215 the composition is skewed to acidic residues; the sequence is EPSEYTDEED. The residue at position 210 (tyrosine 210) is a Phosphotyrosine. Threonine 211 bears the Phosphothreonine mark.

This sequence belongs to the cytochrome b5 family. MAPR subfamily. Interacts with PGRMC1. Interacts with AAAS. As to expression, expressed by endometrial glands and stroma (at protein level). Detected in urine (at protein level).

It is found in the membrane. The protein localises to the nucleus envelope. The protein resides in the endoplasmic reticulum. It localises to the secreted. Its function is as follows. Required for the maintenance of uterine histoarchitecture and normal female reproductive lifespan. May serve as a universal non-classical progesterone receptor in the uterus. Intracellular heme chaperone required for delivery of labile, or signaling heme, to the nucleus. Plays a role in adipocyte function and systemic glucose homeostasis. In brown fat, which has a high demand for heme, delivery of labile heme in the nucleus regulates the activity of heme-responsive transcriptional repressors such as NR1D1 and BACH1. The sequence is that of Membrane-associated progesterone receptor component 2 from Homo sapiens (Human).